A 674-amino-acid chain; its full sequence is DNA ligase (674 aa).

Residues Asp-34 to Asp-38, Ser-84 to Leu-85, and Glu-116 each bind NAD(+). The active-site N6-AMP-lysine intermediate is the Lys-118. The NAD(+) site is built by Arg-139, Glu-174, Lys-291, and Lys-315. Zn(2+) is bound by residues Cys-409, Cys-412, Cys-425, and Cys-430. Residues Arg-586–Ala-674 form the BRCT domain.

Belongs to the NAD-dependent DNA ligase family. LigA subfamily. It depends on Mg(2+) as a cofactor. Mn(2+) is required as a cofactor.

It catalyses the reaction NAD(+) + (deoxyribonucleotide)n-3'-hydroxyl + 5'-phospho-(deoxyribonucleotide)m = (deoxyribonucleotide)n+m + AMP + beta-nicotinamide D-nucleotide.. DNA ligase that catalyzes the formation of phosphodiester linkages between 5'-phosphoryl and 3'-hydroxyl groups in double-stranded DNA using NAD as a coenzyme and as the energy source for the reaction. It is essential for DNA replication and repair of damaged DNA. The sequence is that of DNA ligase from Thermus sp. (strain AK16D).